A 304-amino-acid polypeptide reads, in one-letter code: Homoserine kinase (304 aa).

90–100 is an ATP binding site; the sequence is PLARGLGSSAS.

The protein belongs to the GHMP kinase family. Homoserine kinase subfamily.

The protein localises to the cytoplasm. It catalyses the reaction L-homoserine + ATP = O-phospho-L-homoserine + ADP + H(+). It functions in the pathway amino-acid biosynthesis; L-threonine biosynthesis; L-threonine from L-aspartate: step 4/5. Its function is as follows. Catalyzes the ATP-dependent phosphorylation of L-homoserine to L-homoserine phosphate. The chain is Homoserine kinase from Staphylococcus aureus (strain JH9).